Reading from the N-terminus, the 301-residue chain is Probable alpha-L-glutamate ligase (301 aa).

Positions 104 to 287 constitute an ATP-grasp domain; sequence LQLLSRKGIG…IAGIIIQYLE (184 aa). Residues Lys141, 178-179, Asp187, and 211-213 contribute to the ATP site; these read EY and RSN. Mg(2+)-binding residues include Asp248, Glu260, and Asn262. 3 residues coordinate Mn(2+): Asp248, Glu260, and Asn262.

It belongs to the RimK family. Requires Mg(2+) as cofactor. The cofactor is Mn(2+).

This is Probable alpha-L-glutamate ligase from Pseudomonas aeruginosa (strain UCBPP-PA14).